Here is a 197-residue protein sequence, read N- to C-terminus: Probable GTP-binding protein EngB (197 aa).

Residues 24–197 form the EngB-type G domain; that stretch reads DIPEIALAGR…WDAILEKVNK (174 aa). GTP is bound by residues 32-39, 59-63, 77-80, 144-147, and 176-178; these read GRSNVGKS, GKTQL, DVPG, TKAD, and FSS. 2 residues coordinate Mg(2+): Ser39 and Thr61.

Belongs to the TRAFAC class TrmE-Era-EngA-EngB-Septin-like GTPase superfamily. EngB GTPase family. Mg(2+) is required as a cofactor.

Functionally, necessary for normal cell division and for the maintenance of normal septation. The sequence is that of Probable GTP-binding protein EngB from Streptococcus gordonii (strain Challis / ATCC 35105 / BCRC 15272 / CH1 / DL1 / V288).